The following is a 304-amino-acid chain: Acetyl-coenzyme A carboxylase carboxyl transferase subunit beta (304 aa).

Residues 23–292 enclose the CoA carboxyltransferase N-terminal domain; that stretch reads VWTKCDSCGQ…PNPEAPREGV (270 aa). Zn(2+)-binding residues include cysteine 27, cysteine 30, cysteine 46, and cysteine 49. Residues 27–49 form a C4-type zinc finger; sequence CDSCGQVLYRAELERNLEVCPKC. A disordered region spans residues 285-304; sequence PEAPREGVVVPPVPDQEPEA. Pro residues predominate over residues 295 to 304; the sequence is PPVPDQEPEA.

It belongs to the AccD/PCCB family. In terms of assembly, acetyl-CoA carboxylase is a heterohexamer composed of biotin carboxyl carrier protein (AccB), biotin carboxylase (AccC) and two subunits each of ACCase subunit alpha (AccA) and ACCase subunit beta (AccD). It depends on Zn(2+) as a cofactor.

Its subcellular location is the cytoplasm. It carries out the reaction N(6)-carboxybiotinyl-L-lysyl-[protein] + acetyl-CoA = N(6)-biotinyl-L-lysyl-[protein] + malonyl-CoA. It participates in lipid metabolism; malonyl-CoA biosynthesis; malonyl-CoA from acetyl-CoA: step 1/1. Functionally, component of the acetyl coenzyme A carboxylase (ACC) complex. Biotin carboxylase (BC) catalyzes the carboxylation of biotin on its carrier protein (BCCP) and then the CO(2) group is transferred by the transcarboxylase to acetyl-CoA to form malonyl-CoA. This Shigella sonnei (strain Ss046) protein is Acetyl-coenzyme A carboxylase carboxyl transferase subunit beta.